A 485-amino-acid polypeptide reads, in one-letter code: WD repeat-containing protein 13 (485 aa).

Methionine 1 carries the post-translational modification N-acetylmethionine. Phosphoserine is present on residues serine 70, serine 74, and serine 79. Residue arginine 114 is modified to Asymmetric dimethylarginine; alternate. At arginine 114 the chain carries Omega-N-methylarginine; alternate. 7 WD repeats span residues 162–202 (GMYH…LCQL), 208–246 (TVLRVLRGHTRGVSDFAWSLSNDILVSTSLDATMRIWAS), 250–290 (RCIR…VMNI), 295–335 (KVKG…LFDM), 341–389 (TKAK…VVDN), 394–438 (QLKR…FFDV), and 444–482 (AAVNKLQGHSAPVLDVSFNCDESLLASSDASGMVIVWRR).

Widely expressed.

The protein resides in the nucleus. This Homo sapiens (Human) protein is WD repeat-containing protein 13 (WDR13).